Reading from the N-terminus, the 352-residue chain is Ion-translocating oxidoreductase complex subunit D (352 aa).

The next 4 membrane-spanning stretches (helical) occupy residues 20 to 40, 42 to 62, 69 to 91, and 123 to 143; these read IMLLVVIAALPGIAAQTWFFG, GTLFQIVLAAITALVAEAIVL, VASHLQDYSALLTGLLLAVSIPP, and PAMIGYVVLLISFPVQMTSWL. Residue Thr187 is modified to FMN phosphoryl threonine. The next 5 membrane-spanning stretches (helical) occupy residues 215 to 235, 242 to 262, 267 to 287, 301 to 321, and 322 to 342; these read LAGVGWQWVNLAWLVGGVFLL, WHIPVSFLLTLALCAALGWLF, LASPQLHLLSGATMLGAFFIL, LIFGALAGVLVWLIRSFGGYP, and DGVAFAVLLANITVPLIDYYT.

It belongs to the NqrB/RnfD family. As to quaternary structure, the complex is composed of six subunits: RsxA, RsxB, RsxC, RsxD, RsxE and RsxG. FMN serves as cofactor.

Its subcellular location is the cell inner membrane. Functionally, part of a membrane-bound complex that couples electron transfer with translocation of ions across the membrane. Required to maintain the reduced state of SoxR. The sequence is that of Ion-translocating oxidoreductase complex subunit D from Salmonella agona (strain SL483).